The following is a 194-amino-acid chain: ATP synthase subunit delta (194 aa).

It belongs to the ATPase delta chain family. F-type ATPases have 2 components, F(1) - the catalytic core - and F(0) - the membrane proton channel. F(1) has five subunits: alpha(3), beta(3), gamma(1), delta(1), epsilon(1). F(0) has three main subunits: a(1), b(2) and c(10-14). The alpha and beta chains form an alternating ring which encloses part of the gamma chain. F(1) is attached to F(0) by a central stalk formed by the gamma and epsilon chains, while a peripheral stalk is formed by the delta and b chains.

Its subcellular location is the cell inner membrane. Its function is as follows. F(1)F(0) ATP synthase produces ATP from ADP in the presence of a proton or sodium gradient. F-type ATPases consist of two structural domains, F(1) containing the extramembraneous catalytic core and F(0) containing the membrane proton channel, linked together by a central stalk and a peripheral stalk. During catalysis, ATP synthesis in the catalytic domain of F(1) is coupled via a rotary mechanism of the central stalk subunits to proton translocation. Functionally, this protein is part of the stalk that links CF(0) to CF(1). It either transmits conformational changes from CF(0) to CF(1) or is implicated in proton conduction. This chain is ATP synthase subunit delta, found in Parvibaculum lavamentivorans (strain DS-1 / DSM 13023 / NCIMB 13966).